Here is a 602-residue protein sequence, read N- to C-terminus: UPF0329 protein ECU02_0060 (602 aa).

Positions 313 to 345 are enriched in basic and acidic residues; that stretch reads EEDERKRAEAESARNREELLRMEEREKGKEKGS. Residues 313–407 are disordered; the sequence is EEDERKRAEA…SPKEESKGEE (95 aa). Positions 346 to 356 are enriched in basic residues; that stretch reads KGKGRKKRGKK. Residues 357–369 show a composition bias toward basic and acidic residues; sequence GAGEAKEESKEED. Residues 370–384 are compositionally biased toward acidic residues; sequence RGGEEEESVEADVPV.

It belongs to the UPF0329 family.

This Encephalitozoon cuniculi (strain GB-M1) (Microsporidian parasite) protein is UPF0329 protein ECU02_0060.